The sequence spans 274 residues: NAD(P)H dehydrogenase [quinone] 1 (274 aa).

N-acetylalanine is present on alanine 2. Residues histidine 12, 18-19, and glutamine 67 contribute to the FAD site; that span reads FN. At serine 82 the chain carries Phosphoserine. 104–107 contacts FAD; that stretch reads LYWF. Position 126–128 (126–128) interacts with substrate; it reads AYT. FAD is bound by residues 148-151, tyrosine 156, and arginine 201; that span reads TTGG. The segment at 225–274 is important for apoenzyme conformational stability; the sequence is PSSLFDLNFQAGFLLKKEVQEEQKKNKFGLSVGHHLGKSIPADNQIKARK. A Glycyl lysine isopeptide (Lys-Gly) (interchain with G-Cter in SUMO2) cross-link involves residue lysine 251.

It belongs to the NAD(P)H dehydrogenase (quinone) family. Homodimer. Interacts with PDLIM4 isoform 2; this interaction stabilizes PDLIM4 isoform 2 in response to oxidative stress and protects it from ubiquitin-independent degradation by the core 20S proteasome. Interacts with TP73 (via SAM domain); this interaction is NADH-dependent, stabilizes TP73 in response to oxidative stress and protects it from ubiquitin-independent degradation by the 20S proteasome. Interacts with TP53; this interaction is NADH-dependent, stabilizes TP53 in response to oxidative stress and protects it from ubiquitin-independent degradation by the 20S proteasome. FAD is required as a cofactor.

It is found in the cytoplasm. The protein resides in the cytosol. It carries out the reaction a quinone + NADH + H(+) = a quinol + NAD(+). It catalyses the reaction a quinone + NADPH + H(+) = a quinol + NADP(+). The catalysed reaction is ubiquinone-10 + NADH + H(+) = ubiquinol-10 + NAD(+). The enzyme catalyses menadione + NADH + H(+) = menadiol + NAD(+). In terms of biological role, flavin-containing quinone reductase that catalyzes two-electron reduction of quinones to hydroquinones using either NADH or NADPH as electron donors. In a ping-pong kinetic mechanism, the electrons are sequentially transferred from NAD(P)H to flavin cofactor and then from reduced flavin to the quinone, bypassing the formation of semiquinone and reactive oxygen species. Regulates cellular redox state primarily through quinone detoxification. Reduces components of plasma membrane redox system such as coenzyme Q and vitamin quinones, producing antioxidant hydroquinone forms. In the process may function as superoxide scavenger to prevent hydroquinone oxidation and facilitate excretion. Alternatively, can activate quinones and their derivatives by generating redox reactive hydroquinones with DNA cross-linking antitumor potential. Acts as a gatekeeper of the core 20S proteasome known to degrade proteins with unstructured regions. Upon oxidative stress, interacts with tumor suppressors TP53 and TP73 in a NADH-dependent way and inhibits their ubiquitin-independent degradation by the 20S proteasome. The chain is NAD(P)H dehydrogenase [quinone] 1 (Nqo1) from Rattus norvegicus (Rat).